Consider the following 291-residue polypeptide: Transcription factor TYE7 (291 aa).

Residues 89-109 (FPTDQFFSNPSSYSHSPEVSS) are disordered. Residues 96–109 (SNPSSYSHSPEVSS) show a composition bias toward low complexity. Residue serine 104 is modified to Phosphoserine. The bHLH domain occupies 180–265 (FQKQAHNKIE…EKAVDYILYL (86 aa)). 3 residues coordinate DNA: histidine 185, glutamate 189, and arginine 193. Positions 221 to 245 (DSVKKQDEDGAETAATTPLPSAAAT) are disordered. Residues 233 to 245 (TAATTPLPSAAAT) show a composition bias toward low complexity. Threonine 237 is subject to Phosphothreonine.

Homodimer. Efficient DNA binding requires dimerization with another bHLH protein.

It localises to the nucleus. Its function is as follows. Transcriptional activator of glycolytic gene expression, such as enolase genes (ENO1 and ENO2), glyceraldehyde-3-phosphate dehydrogenase gene (TDH), phosphoglycerate kinase (PGK1), phosphoglycerate mutase (PGM1), pyruvate kinase (PYK1) and triosephosphate isomerase (TPI1) genes. Binds DNA on E-box motifs: 5'-CANNTG-3'. In response to adenylic nucleotide reduction, activates Ty1 mRNA transcription, possibly by controlling Ty1 antisense transcription. Acts as a cell cycle transcription factor. Its function may also be linked to sulfur metabolism and the cross-regulation between phosphate and sulfate metabolism. This is Transcription factor TYE7 from Saccharomyces cerevisiae (strain ATCC 204508 / S288c) (Baker's yeast).